The chain runs to 256 residues: UPF0280 protein MTH_727 (256 aa).

The protein belongs to the UPF0280 family.

This chain is UPF0280 protein MTH_727, found in Methanothermobacter thermautotrophicus (strain ATCC 29096 / DSM 1053 / JCM 10044 / NBRC 100330 / Delta H) (Methanobacterium thermoautotrophicum).